Here is an 89-residue protein sequence, read N- to C-terminus: MTILASISSIGNVKSITKSKNVSFSSSSPSSSQSLNSIQYSPCGGPTLGNVVGNLVGGVLIGTGVIVGSVLNTVGTITNPILHPSCGCN.

The protein belongs to the hssA/B family.

This Dictyostelium discoideum (Social amoeba) protein is HssA/B-like protein DDB_G0295685.